Here is a 185-residue protein sequence, read N- to C-terminus: Imidazoleglycerol-phosphate dehydratase (185 aa).

The protein belongs to the imidazoleglycerol-phosphate dehydratase family.

The protein resides in the cytoplasm. It catalyses the reaction D-erythro-1-(imidazol-4-yl)glycerol 3-phosphate = 3-(imidazol-4-yl)-2-oxopropyl phosphate + H2O. It functions in the pathway amino-acid biosynthesis; L-histidine biosynthesis; L-histidine from 5-phospho-alpha-D-ribose 1-diphosphate: step 6/9. This is Imidazoleglycerol-phosphate dehydratase from Pyrobaculum arsenaticum (strain DSM 13514 / JCM 11321 / PZ6).